The primary structure comprises 369 residues: 2-aminoethylphosphonate--pyruvate transaminase (369 aa).

Residue K193 is modified to N6-(pyridoxal phosphate)lysine.

Belongs to the class-V pyridoxal-phosphate-dependent aminotransferase family. PhnW subfamily. In terms of assembly, homodimer. It depends on pyridoxal 5'-phosphate as a cofactor.

It carries out the reaction (2-aminoethyl)phosphonate + pyruvate = phosphonoacetaldehyde + L-alanine. Functionally, involved in phosphonate degradation. The protein is 2-aminoethylphosphonate--pyruvate transaminase of Burkholderia thailandensis (strain ATCC 700388 / DSM 13276 / CCUG 48851 / CIP 106301 / E264).